Reading from the N-terminus, the 623-residue chain is Aspartate--tRNA(Asp/Asn) ligase (623 aa).

Glu175 contacts L-aspartate. The tract at residues 199–202 (QQFK) is aspartate. The L-aspartate site is built by Arg221 and His455. An ATP-binding site is contributed by 221–223 (RDE). Glu517 is a binding site for ATP. Arg524 contacts L-aspartate. 569-572 (GVDR) contributes to the ATP binding site.

This sequence belongs to the class-II aminoacyl-tRNA synthetase family. Type 1 subfamily. In terms of assembly, homodimer.

It is found in the cytoplasm. The catalysed reaction is tRNA(Asx) + L-aspartate + ATP = L-aspartyl-tRNA(Asx) + AMP + diphosphate. Aspartyl-tRNA synthetase with relaxed tRNA specificity since it is able to aspartylate not only its cognate tRNA(Asp) but also tRNA(Asn). Reaction proceeds in two steps: L-aspartate is first activated by ATP to form Asp-AMP and then transferred to the acceptor end of tRNA(Asp/Asn). The polypeptide is Aspartate--tRNA(Asp/Asn) ligase (Methylocella silvestris (strain DSM 15510 / CIP 108128 / LMG 27833 / NCIMB 13906 / BL2)).